The chain runs to 749 residues: uncharacterized protein (749 aa).

Disordered stretches follow at residues 1 to 58 (MGTV…QPSN), 124 to 170 (DANA…PSPL), 200 to 291 (SRFS…PPVS), and 385 to 405 (YTWSRHSTSGPSRSTVLNPST). Residues 13–24 (LNNGLSSNNGSS) show a composition bias toward low complexity. 4 stretches are compositionally biased toward polar residues: residues 149 to 159 (KSASKDSNAFN), 238 to 252 (ESKTSPFATRRPSLN), 265 to 275 (LNYQNSSLNPS), and 388 to 405 (SRHSTSGPSRSTVLNPST). One can recognise a PSP1 C-terminal domain in the interval 644–729 (KRILRKAQPH…YKTRIWMCAV (86 aa)).

This is an uncharacterized protein from Schizosaccharomyces pombe (strain 972 / ATCC 24843) (Fission yeast).